The primary structure comprises 239 residues: Purine nucleoside phosphorylase DeoD-type (239 aa).

Residue His-5 participates in a purine D-ribonucleoside binding. Phosphate-binding positions include Gly-21, Arg-25, Arg-44, and 88–91 (RVGS). Residues 180-182 (EME) and 204-205 (SD) each bind a purine D-ribonucleoside. Residue Asp-205 is the Proton donor of the active site.

This sequence belongs to the PNP/UDP phosphorylase family. As to quaternary structure, homohexamer; trimer of homodimers.

It catalyses the reaction a purine D-ribonucleoside + phosphate = a purine nucleobase + alpha-D-ribose 1-phosphate. The catalysed reaction is a purine 2'-deoxy-D-ribonucleoside + phosphate = a purine nucleobase + 2-deoxy-alpha-D-ribose 1-phosphate. Functionally, catalyzes the reversible phosphorolytic breakdown of the N-glycosidic bond in the beta-(deoxy)ribonucleoside molecules, with the formation of the corresponding free purine bases and pentose-1-phosphate. The protein is Purine nucleoside phosphorylase DeoD-type of Salmonella agona (strain SL483).